The following is a 181-amino-acid chain: Large ribosomal subunit protein uL5 (181 aa).

The protein belongs to the universal ribosomal protein uL5 family. In terms of assembly, part of the 50S ribosomal subunit; part of the 5S rRNA/L5/L18/L25 subcomplex. Contacts the 5S rRNA and the P site tRNA. Forms a bridge to the 30S subunit in the 70S ribosome.

Functionally, this is one of the proteins that bind and probably mediate the attachment of the 5S RNA into the large ribosomal subunit, where it forms part of the central protuberance. In the 70S ribosome it contacts protein S13 of the 30S subunit (bridge B1b), connecting the 2 subunits; this bridge is implicated in subunit movement. Contacts the P site tRNA; the 5S rRNA and some of its associated proteins might help stabilize positioning of ribosome-bound tRNAs. The chain is Large ribosomal subunit protein uL5 from Acaryochloris marina (strain MBIC 11017).